Consider the following 182-residue polypeptide: Receptor activity-modifying protein 2 (182 aa).

The first 45 residues, 1 to 45, serve as a signal peptide directing secretion; it reads MAPLRVERAPGGSQLAVTSAQRPAALRLPPLLLLLLLLLLGAVST. Topologically, residues 46–150 are extracellular; the sequence is SPESLNQSHP…VQPTFSDPPE (105 aa). Residues Asn51, Asn92, and Asn137 are each glycosylated (N-linked (GlcNAc...) asparagine). 2 disulfides stabilise this stretch: Cys76–Cys106 and Cys91–Cys138. A helical membrane pass occupies residues 151–172; the sequence is DVLLAMIIAPICLIPFLVTLVV. The Cytoplasmic segment spans residues 173 to 182; sequence WRSKDGDAQA.

The protein belongs to the RAMP family. As to quaternary structure, heterodimer of CALCRL and RAMP2; the interaction forms the receptor complex for adrenomedullin/ADM. Heterodimer of CALCR and RAMP2; interaction forms the AMYR2 receptor complex for calcitonin/CALC and amylin/IAPP.

It is found in the cell membrane. Accessory protein that interacts with and modulates the function of G-protein coupled receptors including calcitonin gene-related peptide type 1 receptor (CALCRL) and calcitonin receptor (CALCR). Required for the transport of CALCRL to the plasma membrane. Together with CALCRL, form a receptor complex for adrenomedullin/ADM. Together with CALCR, act as a receptor complex for calcitonin/CT/CALC. Together with CALCR, also act as a receptor complex for amylin/IAPP. The chain is Receptor activity-modifying protein 2 from Rattus norvegicus (Rat).